Here is a 101-residue protein sequence, read N- to C-terminus: Small ribosomal subunit protein uS14 (101 aa).

The protein belongs to the universal ribosomal protein uS14 family. As to quaternary structure, part of the 30S ribosomal subunit. Contacts proteins S3 and S10.

Functionally, binds 16S rRNA, required for the assembly of 30S particles and may also be responsible for determining the conformation of the 16S rRNA at the A site. In Paracoccus denitrificans (strain Pd 1222), this protein is Small ribosomal subunit protein uS14.